Here is a 448-residue protein sequence, read N- to C-terminus: Two-component sensor PhoQ (448 aa).

A signal peptide spans 1–33 (MIRSLRIRLMLGAAALAVLFMLALLPALQRAFG). The chain crosses the membrane as a helical span at residues 169–189 (WLGGALLVLLGLLWLGLTWGF). The region spanning 186–237 (TWGFRAMRGLSSELDQIESGERESLSEEHPRELLRLTHSLNRLLRSEHKQRE) is the HAMP domain. Residues 245–448 (DLAHSLKTPL…ACFRIRFATV (204 aa)) form the Histidine kinase domain. A Phosphohistidine; by autocatalysis modification is found at H248.

It is found in the membrane. The enzyme catalyses ATP + protein L-histidine = ADP + protein N-phospho-L-histidine.. Its function is as follows. Member of the two-component regulatory system PhoP/PhoQ that plays a role in the regulation of resistance towards polymyxin B and cationic antimicrobial peptides in response to limiting concentrations of Mg(2+). May function as a membrane-associated protein kinase that phosphorylates PhoP in response to environmental signals leading to activation of specific gene promoters. In Pseudomonas aeruginosa (strain ATCC 15692 / DSM 22644 / CIP 104116 / JCM 14847 / LMG 12228 / 1C / PRS 101 / PAO1), this protein is Two-component sensor PhoQ (phoQ).